A 140-amino-acid chain; its full sequence is MSDQGNEHANHDGIDNAGLSAEVGSGPEAKRTRDEPPEQTASDEAVSNQSPDSTIGLSDAQVRAREAAKELLEYEFEGIIKIEAANGDGWRTVVELVERNAVPDTQDIIGRYEITLDATGSVTGYELLERYRRGDMKEEL.

A compositionally biased stretch (basic and acidic residues) spans 1 to 14; the sequence is MSDQGNEHANHDGI. The segment at 1 to 61 is disordered; sequence MSDQGNEHAN…DSTIGLSDAQ (61 aa). Positions 39 to 56 are enriched in polar residues; it reads QTASDEAVSNQSPDSTIG.

It belongs to the gas vesicle GvpO family. Forms homodimers, forms a GvpN-GvpO heterodimer, interacts with GvpC, GvpF, GvpI and GvpL, might interact with GvpA.

It is found in the gas vesicle. Its subcellular location is the cytoplasm. Its function is as follows. A minor component of the gas vesicle (GV), may play a role in transcription and/or RNA stability and/or in GV assembly. Gas vesicles are small, hollow, gas filled protein structures found in some microorganisms. They allow positioning of halobacteria at the optimal depth for growth in the poorly aerated shallow brine pools of their habitat. Functionally, expression of a 9.5 kb mc-vac DNA fragment containing 2 divergently transcribed regions (gvpD-gvpE-gvpF-gvpG-gvpH-gvpI-gvpJ-gvpK-gvpL-gvpM and gvpA-gvpC-gvpN-gvpO) allows H.volcanii to produce gas vesicles. The protein is Gas vesicle protein O of Haloferax mediterranei (strain ATCC 33500 / DSM 1411 / JCM 8866 / NBRC 14739 / NCIMB 2177 / R-4) (Halobacterium mediterranei).